The following is a 590-amino-acid chain: Arginine--tRNA ligase (590 aa).

Residues 138 to 148 (ANPTGPLHIGH) carry the 'HIGH' region motif.

It belongs to the class-I aminoacyl-tRNA synthetase family. As to quaternary structure, monomer.

Its subcellular location is the cytoplasm. The enzyme catalyses tRNA(Arg) + L-arginine + ATP = L-arginyl-tRNA(Arg) + AMP + diphosphate. This Orientia tsutsugamushi (strain Ikeda) (Rickettsia tsutsugamushi) protein is Arginine--tRNA ligase.